The chain runs to 460 residues: Argininosuccinate lyase (460 aa).

It belongs to the lyase 1 family. Argininosuccinate lyase subfamily.

It is found in the cytoplasm. The enzyme catalyses 2-(N(omega)-L-arginino)succinate = fumarate + L-arginine. Its pathway is amino-acid biosynthesis; L-arginine biosynthesis; L-arginine from L-ornithine and carbamoyl phosphate: step 3/3. This Alkaliphilus metalliredigens (strain QYMF) protein is Argininosuccinate lyase.